A 666-amino-acid chain; its full sequence is Vicilin-like antimicrobial peptides 2-1 (666 aa).

The N-terminal stretch at 1 to 27 (MAINTSNLCSLLFLLSLFLLSTTVSLA) is a signal peptide. Disordered regions lie at residues 161-191 (QQKR…DPQQ) and 219-254 (QQRQ…PYYF). 2 Cupin type-1 domains span residues 271–410 (SVLE…EKLR) and 455–625 (YNLF…KEVE). The segment at 629-655 (NSQDQSIFFPGPRQHQQQSPRSTKQQQ) is disordered. The span at 642–655 (QHQQQSPRSTKQQQ) shows a compositional bias: low complexity.

It belongs to the 7S seed storage protein family.

The protein localises to the secreted. Functionally, antimicrobial peptides 2b, 2c and 2d have antibacterial and antifungal activity against a range of species. The polypeptide is Vicilin-like antimicrobial peptides 2-1 (Macadamia integrifolia (Macadamia nut)).